The primary structure comprises 405 residues: S-adenosylmethionine synthase (405 aa).

Residue 139–144 (GKGSAD) coordinates ATP.

Belongs to the AdoMet synthase 2 family. The cofactor is Mg(2+).

The catalysed reaction is L-methionine + ATP + H2O = S-adenosyl-L-methionine + phosphate + diphosphate. It functions in the pathway amino-acid biosynthesis; S-adenosyl-L-methionine biosynthesis; S-adenosyl-L-methionine from L-methionine: step 1/1. In terms of biological role, catalyzes the formation of S-adenosylmethionine from methionine and ATP. In Sulfurisphaera tokodaii (strain DSM 16993 / JCM 10545 / NBRC 100140 / 7) (Sulfolobus tokodaii), this protein is S-adenosylmethionine synthase.